A 416-amino-acid chain; its full sequence is Creatine kinase U-type, mitochondrial (416 aa).

Residues 1–39 (MAGPFSRLLSARPGLRLLALAGAGSLAAGFLLRSEPVRA) constitute a mitochondrion transit peptide. Residues 40–64 (ASERRRLYPPSAEYPDLRKHNNCMA) form a cardiolipin-binding region. A Phosphagen kinase N-terminal domain is found at 45–131 (RLYPPSAEYP…FDPVIQERHN (87 aa)). At Ser151 the chain carries Phosphoserine. The region spanning 158–400 (YVLSSRVRTG…NFLIDCERRL (243 aa)) is the Phosphagen kinase C-terminal domain. 161-165 (SSRVR) is a binding site for ATP. Ser196 is modified (phosphoserine). The residue at position 213 (Thr213) is a Phosphothreonine. An ATP-binding site is contributed by His224. Ser232 is subject to Phosphoserine. ATP-binding positions include Arg269, Arg325, and 353–358 (RGTGGV). Thr355 carries the phosphothreonine modification. Ser365 carries the phosphoserine modification. Asp368 lines the ATP pocket.

It belongs to the ATP:guanido phosphotransferase family. As to quaternary structure, exists as an octamer composed of four MTCK homodimers.

The protein localises to the mitochondrion inner membrane. The catalysed reaction is creatine + ATP = N-phosphocreatine + ADP + H(+). Reversibly catalyzes the transfer of phosphate between ATP and various phosphogens (e.g. creatine phosphate). Creatine kinase isoenzymes play a central role in energy transduction in tissues with large, fluctuating energy demands, such as skeletal muscle, heart, brain and spermatozoa. This chain is Creatine kinase U-type, mitochondrial (CKMT1), found in Bos taurus (Bovine).